The sequence spans 234 residues: HTH-type transcriptional regulator ArcR (234 aa).

40 to 129 serves as a coordination point for a nucleoside 3',5'-cyclic phosphate; that stretch reads VRHYTKGQVI…MAFLCKANDD (90 aa). Positions 155 to 228 constitute an HTH crp-type domain; sequence KFAKDRIIKL…HKNWLVSKHL (74 aa). The segment at residues 188-207 is a DNA-binding region (H-T-H motif); the sequence is IQLMSDMAGISRETAGHIIH.

The protein resides in the cytoplasm. In terms of biological role, positively regulates the expression of the arcABDCR operon under anaerobic conditions, thus playing an essential role in arginine catabolism. May also control the expression of genes encoding proteins which are involved in anaerobic metabolism. Can bind cyclic AMP. The protein is HTH-type transcriptional regulator ArcR (arcR) of Staphylococcus aureus (strain USA300 / TCH1516).